The sequence spans 246 residues: Octanoyltransferase (246 aa).

In terms of domain architecture, BPL/LPL catalytic spans 50-231; the sequence is PDTDDEIWVV…RLIAHLDGAT (182 aa). Residues 90 to 97, 162 to 164, and 175 to 177 contribute to the substrate site; these read RGGQITYH, ALG, and GLS. The active-site Acyl-thioester intermediate is cysteine 193.

This sequence belongs to the LipB family.

It localises to the cytoplasm. It catalyses the reaction octanoyl-[ACP] + L-lysyl-[protein] = N(6)-octanoyl-L-lysyl-[protein] + holo-[ACP] + H(+). The protein operates within protein modification; protein lipoylation via endogenous pathway; protein N(6)-(lipoyl)lysine from octanoyl-[acyl-carrier-protein]: step 1/2. Its function is as follows. Catalyzes the transfer of endogenously produced octanoic acid from octanoyl-acyl-carrier-protein onto the lipoyl domains of lipoate-dependent enzymes. Lipoyl-ACP can also act as a substrate although octanoyl-ACP is likely to be the physiological substrate. The chain is Octanoyltransferase from Burkholderia pseudomallei (strain 1106a).